A 363-amino-acid polypeptide reads, in one-letter code: G-protein coupled receptor 78 (363 aa).

The Extracellular segment spans residues Met1–Leu7. A helical transmembrane segment spans residues Leu8–Leu28. Topologically, residues Cys29–Asn47 are cytoplasmic. Residues Leu48–Met68 traverse the membrane as a helical segment. Residues Arg69–Gln80 are Extracellular-facing. Residues Cys79 and Cys156 are joined by a disulfide bond. A helical membrane pass occupies residues Val81–Ser101. The Cytoplasmic portion of the chain corresponds to Ala102–Tyr122. A helical transmembrane segment spans residues Ala123–Gly143. At Cys144–Arg168 the chain is on the extracellular side. Residues Phe169 to Cys189 traverse the membrane as a helical segment. The Cytoplasmic segment spans residues Leu190 to Lys242. Residues Ile243–Ala263 form a helical membrane-spanning segment. Residues Glu264–Ile277 lie on the Extracellular side of the membrane. Residues Leu278 to Leu297 traverse the membrane as a helical segment. Residues Arg298–His363 lie on the Cytoplasmic side of the membrane. A disordered region spans residues Thr340 to His363. Polar residues predominate over residues Pro343–His363.

It belongs to the G-protein coupled receptor 1 family. As to expression, high level of expression in placenta. Expressed throughout the brain at low level. No expression detected in skeletal muscle, lung, heart, liver, pancreas, or kidney.

Its subcellular location is the cell membrane. Functionally, orphan receptor. Displays a significant level of constitutive activity. Its effect is mediated by G(s)-alpha protein that stimulate adenylate cyclase, resulting in an elevation of intracellular cAMP. The polypeptide is G-protein coupled receptor 78 (GPR78) (Homo sapiens (Human)).